The sequence spans 589 residues: Protein PAF1 homolog (589 aa).

Pro residues predominate over residues 1 to 54 (MASYRPPYPPLPQPPSQNSLAPPPPPPSLPPPVPPPPPSHQPYSYPPPPPPPPH). 2 disordered regions span residues 1–180 (MASY…PLLT) and 542–589 (GVYS…DYSE). Low complexity predominate over residues 55–65 (AYYQQGPHYPQ). A compositionally biased stretch (pro residues) spans 71–87 (APPPPPPPSAPPPLVPD). A compositionally biased stretch (basic and acidic residues) spans 88-116 (PPRHQGPNDHEKGASKQVGRRERAKPDPS). Positions 117–127 (KHHHRSHLPHS) are enriched in basic residues. The stretch at 126–159 (HSKKIETEEERRLRKKRELEKQRQDEKHRQQMKN) forms a coiled coil. Positions 128-154 (KKIETEEERRLRKKRELEKQRQDEKHR) are enriched in basic and acidic residues.

This sequence belongs to the PAF1 family. As to quaternary structure, component of the nuclear PAF1 complex (PAF1C), which consists of VIP2/ELF7/PAF1, VIP3/SKI8/WDR61, VIP4/LEO1, VIP5/RTF1, VIP6/ELF8/CTR9 and CDC73. In terms of tissue distribution, expressed in roots, leaves and shoot apex.

Its subcellular location is the nucleus. Its function is as follows. Component of the PAF1 complex (PAF1C) which is involved in histone modifications such as methylation on histone H3 'Lys-4' (H3K4me3). Involved in regulation of flowering time. Required for the expression of the flowering repressors and MAD-box genes FLC, AGL27/FLM and AGL31/MAF2. Required for histone H3 trimethylation on 'Lys-4' H3K4me3 at the FLC and AGL27/FLM loci. Involved in the control of seed dormancy and germination. In Arabidopsis thaliana (Mouse-ear cress), this protein is Protein PAF1 homolog.